Reading from the N-terminus, the 231-residue chain is ADP-ribose pyrophosphatase (231 aa).

F2 bears the N-acetylserine mark. Residues W46, 64–65 (WD), R69, and R103 contribute to the substrate site. Positions 75–214 (GGVDGIGILT…DQQGYKLDAR (140 aa)) constitute a Nudix hydrolase domain. A115 serves as a coordination point for Mg(2+). The Nudix box signature appears at 116 to 137 (GLIDAGEDIDTAALRELKEETG). Substrate is bound at residue L117. Residues E131 and E135 each coordinate Mg(2+). A substrate-binding site is contributed by D152. E185 serves as a coordination point for Mg(2+).

Belongs to the Nudix hydrolase family. NudF subfamily. The cofactor is Mg(2+). Mn(2+) serves as cofactor.

The enzyme catalyses ADP-D-ribose + H2O = D-ribose 5-phosphate + AMP + 2 H(+). The sequence is that of ADP-ribose pyrophosphatase (YSA1) from Saccharomyces cerevisiae (strain ATCC 204508 / S288c) (Baker's yeast).